A 423-amino-acid polypeptide reads, in one-letter code: Serine incorporator 5 (423 aa).

Topologically, residues 1–36 (MSAQCCAGQLACCCGSAGCSLCCDCCPRIRQSLSTR) are extracellular. Residues 37–57 (FMYALYFILVVVLCCIMMSTT) traverse the membrane as a helical segment. At 58 to 89 (VAHKMKEHIPFFEDMCKGIKAGDTCEKLVGYS) the chain is on the cytoplasmic side. The helical transmembrane segment at 90-110 (AVYRVCFGMACFFFIFCLLTL) threads the bilayer. At 111-124 (KINNSKSCRAHIHN) the chain is on the extracellular side. Asn113 carries an N-linked (GlcNAc...) asparagine glycan. Residues 125–145 (GFWFFKLLLLGAMCSGAFFIP) traverse the membrane as a helical segment. Residues 146-156 (DQDTFLNAWRY) lie on the Cytoplasmic side of the membrane. A helical membrane pass occupies residues 157–177 (VGAVGGFLFIGIQLLLLVEFA). Residues 178–198 (HKWNKNWTAGTASNKLWYASL) lie on the Extracellular side of the membrane. An N-linked (GlcNAc...) asparagine glycan is attached at Asn183. A helical membrane pass occupies residues 199-219 (ALVTLIMYSIATGGLVLMAVF). Over 220 to 230 (YTQKDSCMENK) the chain is Cytoplasmic. The helical transmembrane segment at 231–251 (ILLGVNGGLCLLISLVAISPW) threads the bilayer. The Extracellular segment spans residues 252–258 (VQNRQPH). The chain crosses the membrane as a helical span at residues 259–279 (SGLLQSGVISCYVTYLTFSAL). Residues 280 to 311 (SSKPAEVVLDEHGKNVTICVPDFGQDLYRDEN) lie on the Cytoplasmic side of the membrane. Residues 312-332 (LVTILGTSLLIGCILYSCLTS) traverse the membrane as a helical segment. The Extracellular segment spans residues 333–385 (TTRSSSDALQGRYAAPELEIARCCFCFSPGGEDTEEQQPGKEGPRVIYDEKKG). A helical transmembrane segment spans residues 386–406 (TVYIYSYFHFVFFLASLYVMM). At 407–423 (TVTNWFNHVRSAFHLLP) the chain is on the cytoplasmic side.

Belongs to the TDE1 family. Highly expressed in placenta, skeletal muscle, spleen, thymus, testis and peripheral leukocyte and is expressed weakly in the heart, liver and fetal brain.

The protein localises to the cell membrane. It localises to the cytoplasm. Its subcellular location is the perinuclear region. It carries out the reaction a 1,2-diacyl-sn-glycero-3-phospho-L-serine(in) = a 1,2-diacyl-sn-glycero-3-phospho-L-serine(out). The enzyme catalyses a 1,2-diacyl-sn-glycero-3-phosphocholine(in) = a 1,2-diacyl-sn-glycero-3-phosphocholine(out). The catalysed reaction is a 1,2-diacyl-sn-glycero-3-phosphoethanolamine(in) = a 1,2-diacyl-sn-glycero-3-phosphoethanolamine(out). In terms of biological role, restriction factor required to restrict infectivity of lentiviruses, such as HIV-1: acts by inhibiting an early step of viral infection. Impairs the penetration of the viral particle into the cytoplasm. Non-ATP-dependent, non-specific lipid transporter for phosphatidylserine, phosphatidylcholine, and phosphatidylethanolamine. Functions as a scramblase that flips lipids in both directions across the membrane. Phospholipid scrambling results in HIV-1 surface exposure of phosphatidylserine and loss of membrane asymmetry, which leads to changes in HIV-1 Env conformation and loss of infectivity. Enhances the incorporation of serine into phosphatidylserine and sphingolipids. May play a role in providing serine molecules for the formation of myelin glycosphingolipids in oligodendrocytes. The sequence is that of Serine incorporator 5 from Homo sapiens (Human).